We begin with the raw amino-acid sequence, 98 residues long: La1-like protein 13 (98 aa).

Positions 1–24 (MERILKPVFLAILIVLSFSSQCMG) are cleaved as a signal peptide. K97 carries the post-translational modification Lysine amide.

Belongs to the scorpion La1-like peptide family. Post-translationally, contains 4 disulfide bonds. As to expression, expressed by the venom gland.

Its subcellular location is the secreted. This Urodacus yaschenkoi (Inland robust scorpion) protein is La1-like protein 13.